Consider the following 1135-residue polypeptide: WASH complex subunit 4 (1135 aa).

Alanine 2 is modified (N-acetylalanine).

This sequence belongs to the SWIP family. Probable component of the WASH complex.

This is WASH complex subunit 4 from Dictyostelium discoideum (Social amoeba).